A 138-amino-acid chain; its full sequence is Putative protein encoded by LINC02912 (138 aa).

The next 2 membrane-spanning stretches (helical) occupy residues 32-52 and 65-85; these read FALSFLIGKMGIIILSVCLIC and CLINVSFSLYSCFIVFVTISQ. The tract at residues 109–138 is disordered; sequence SGGQSQHSWPCPERSKNLPQVSKQLRNRAG.

The protein localises to the membrane. The chain is Putative protein encoded by LINC02912 from Homo sapiens (Human).